The sequence spans 347 residues: NADH-ubiquinone oxidoreductase chain 2 (347 aa).

10 consecutive transmembrane segments (helical) span residues 3–23, 59–79, 95–115, 127–147, 149–169, 178–198, 200–220, 241–261, 274–294, and 325–345; these read PLTL…TVFS, YFLT…LNIL, PVLI…HFWV, GLIL…QISP, INPT…GWGG, ILAY…TFNP, TMVL…MMFM, VSTI…TGFI, GNII…YFYM, and LITP…ALSV.

The protein belongs to the complex I subunit 2 family. Core subunit of respiratory chain NADH dehydrogenase (Complex I) which is composed of 45 different subunits. Interacts with TMEM242.

Its subcellular location is the mitochondrion inner membrane. The enzyme catalyses a ubiquinone + NADH + 5 H(+)(in) = a ubiquinol + NAD(+) + 4 H(+)(out). Functionally, core subunit of the mitochondrial membrane respiratory chain NADH dehydrogenase (Complex I) which catalyzes electron transfer from NADH through the respiratory chain, using ubiquinone as an electron acceptor. Essential for the catalytic activity and assembly of complex I. The chain is NADH-ubiquinone oxidoreductase chain 2 from Oryctolagus cuniculus (Rabbit).